We begin with the raw amino-acid sequence, 166 residues long: Endoribonuclease YbeY (166 aa).

Zn(2+) contacts are provided by His136, His140, and His146.

It belongs to the endoribonuclease YbeY family. Zn(2+) is required as a cofactor.

It is found in the cytoplasm. In terms of biological role, single strand-specific metallo-endoribonuclease involved in late-stage 70S ribosome quality control and in maturation of the 3' terminus of the 16S rRNA. This chain is Endoribonuclease YbeY, found in Synechococcus sp. (strain CC9605).